A 335-amino-acid polypeptide reads, in one-letter code: Transaldolase (335 aa).

At S2 the chain carries N-acetylserine. K144 functions as the Schiff-base intermediate with substrate in the catalytic mechanism.

Belongs to the transaldolase family. Type 1 subfamily. As to quaternary structure, homodimer.

It carries out the reaction D-sedoheptulose 7-phosphate + D-glyceraldehyde 3-phosphate = D-erythrose 4-phosphate + beta-D-fructose 6-phosphate. It participates in carbohydrate degradation; pentose phosphate pathway; D-glyceraldehyde 3-phosphate and beta-D-fructose 6-phosphate from D-ribose 5-phosphate and D-xylulose 5-phosphate (non-oxidative stage): step 2/3. Functionally, transaldolase is important for the balance of metabolites in the pentose-phosphate pathway. The polypeptide is Transaldolase (TAL1) (Saccharomyces cerevisiae (strain ATCC 204508 / S288c) (Baker's yeast)).